The following is a 648-amino-acid chain: Threonine--tRNA ligase (648 aa).

Residues M1–T63 form the TGS domain. A catalytic region spans residues D247–P544. Zn(2+) contacts are provided by C344, H395, and H521.

The protein belongs to the class-II aminoacyl-tRNA synthetase family. As to quaternary structure, homodimer. Zn(2+) is required as a cofactor.

It is found in the cytoplasm. The enzyme catalyses tRNA(Thr) + L-threonine + ATP = L-threonyl-tRNA(Thr) + AMP + diphosphate + H(+). Functionally, catalyzes the attachment of threonine to tRNA(Thr) in a two-step reaction: L-threonine is first activated by ATP to form Thr-AMP and then transferred to the acceptor end of tRNA(Thr). Also edits incorrectly charged L-seryl-tRNA(Thr). The chain is Threonine--tRNA ligase from Roseobacter denitrificans (strain ATCC 33942 / OCh 114) (Erythrobacter sp. (strain OCh 114)).